The following is a 396-amino-acid chain: 1-deoxy-D-xylulose 5-phosphate reductoisomerase (396 aa).

NADPH-binding residues include threonine 13, glycine 14, serine 15, isoleucine 16, and asparagine 127. Residue lysine 128 participates in 1-deoxy-D-xylulose 5-phosphate binding. Glutamate 129 lines the NADPH pocket. Mn(2+) is bound at residue aspartate 153. 4 residues coordinate 1-deoxy-D-xylulose 5-phosphate: serine 154, glutamate 155, serine 184, and histidine 207. Mn(2+) is bound at residue glutamate 155. Glycine 213 contributes to the NADPH binding site. 1-deoxy-D-xylulose 5-phosphate-binding residues include serine 220, asparagine 225, lysine 226, and glutamate 229. Glutamate 229 serves as a coordination point for Mn(2+).

This sequence belongs to the DXR family. It depends on Mg(2+) as a cofactor. Requires Mn(2+) as cofactor.

It catalyses the reaction 2-C-methyl-D-erythritol 4-phosphate + NADP(+) = 1-deoxy-D-xylulose 5-phosphate + NADPH + H(+). It functions in the pathway isoprenoid biosynthesis; isopentenyl diphosphate biosynthesis via DXP pathway; isopentenyl diphosphate from 1-deoxy-D-xylulose 5-phosphate: step 1/6. Its function is as follows. Catalyzes the NADPH-dependent rearrangement and reduction of 1-deoxy-D-xylulose-5-phosphate (DXP) to 2-C-methyl-D-erythritol 4-phosphate (MEP). This chain is 1-deoxy-D-xylulose 5-phosphate reductoisomerase, found in Pseudomonas fluorescens (strain ATCC BAA-477 / NRRL B-23932 / Pf-5).